A 181-amino-acid chain; its full sequence is Cytochrome b6-f complex iron-sulfur subunit (181 aa).

The segment at 1–35 (MAQTGNFKSPARMSSLGQGAAPASAGAVTGGKPRE) is disordered. Helical transmembrane passes span 53–73 (VGGV…RYIV) and 114–134 (GGSL…VHWD). Residues 85–178 (LAVGPASDVP…VKIEDGKIVV (94 aa)) enclose the Rieske domain. [2Fe-2S] cluster-binding residues include cysteine 124, histidine 126, cysteine 142, and histidine 145. Cysteine 129 and cysteine 144 are disulfide-bonded.

Belongs to the Rieske iron-sulfur protein family. [2Fe-2S] cluster serves as cofactor.

The protein localises to the cell inner membrane. It carries out the reaction 2 oxidized [plastocyanin] + a plastoquinol + 2 H(+)(in) = 2 reduced [plastocyanin] + a plastoquinone + 4 H(+)(out). Functionally, component of the green S-bacteria bc-complex which consists of the Rieske protein and cytochrome b subunit and which appears to lack a cytochrome c1-equivalent. This complex has a comparatively low redox potential. This Chlorobaculum tepidum (strain ATCC 49652 / DSM 12025 / NBRC 103806 / TLS) (Chlorobium tepidum) protein is Cytochrome b6-f complex iron-sulfur subunit (petC).